The primary structure comprises 443 residues: Putative metabolite transport protein YaaU (443 aa).

The Cytoplasmic segment spans residues 1-18; the sequence is MQPSRNFDDLKFSSIHRR. A helical membrane pass occupies residues 19-39; it reads ILLWGSGGPFLDGYVLVMIGV. At 40–53 the chain is on the periplasmic side; the sequence is ALEQLTPALKLDAD. The chain crosses the membrane as a helical span at residues 54 to 74; sequence WIGLLGAGTLAGLFVGTSLFG. Residues 75–84 are Cytoplasmic-facing; it reads YISDKVGRRK. A helical transmembrane segment spans residues 85-105; it reads MFLIDIIAIGVISVATMFVSS. The Periplasmic portion of the chain corresponds to 106–113; it reads PVELLVMR. Residues 114–134 traverse the membrane as a helical segment; it reads VLIGIVIGADYPIATSMITEF. At 135 to 145 the chain is on the cytoplasmic side; sequence SSTRQRAFSIS. The chain crosses the membrane as a helical span at residues 146 to 166; that stretch reads FIAAMWYVGATCADLVGYWLY. The Periplasmic segment spans residues 167–173; sequence DVEGGWR. Residues 174-194 form a helical membrane-spanning segment; sequence WMLGSAAIPCLLILIGRFELP. Topologically, residues 195–241 are cytoplasmic; sequence ESPRWLLRKGRVKECEEMMIKLFGEPVAFDEEQPQQTRFRDLFNRRH. A helical transmembrane segment spans residues 242–262; sequence FPFVLFVAAIWTCQVIPMFAI. At 263 to 282 the chain is on the periplasmic side; that stretch reads YTFGPQIVGLLGLGVGKNAA. The chain crosses the membrane as a helical span at residues 283 to 303; it reads LGNVVISLFFMLGCIPPMLWL. The Cytoplasmic portion of the chain corresponds to 304-309; it reads NTAGRR. The helical transmembrane segment at 310–329 threads the bilayer; it reads PLLIGSFAMMTLALAVLGLI. The Periplasmic segment spans residues 330–334; the sequence is PDMGI. A helical transmembrane segment spans residues 335 to 357; that stretch reads WLVVMAFAVYAFFSGGPGNLQWL. The Cytoplasmic segment spans residues 358-373; the sequence is YPNELFPTDIRASAVG. The chain crosses the membrane as a helical span at residues 374–394; sequence VIMSLSRIGTIVSTWALPIFI. Residues 395-401 lie on the Periplasmic side of the membrane; sequence NNYGISN. The chain crosses the membrane as a helical span at residues 402-422; the sequence is TMLMGAGISLFGLLISVAFAP. The Cytoplasmic segment spans residues 423–443; that stretch reads ETRGMSLAQTSNMTIRGQRMG.

It belongs to the major facilitator superfamily. Sugar transporter (TC 2.A.1.1) family.

The protein localises to the cell inner membrane. The protein is Putative metabolite transport protein YaaU (yaaU) of Escherichia coli (strain K12).